The chain runs to 246 residues: Pyridoxine 5'-phosphate synthase (246 aa).

Asn12 lines the 3-amino-2-oxopropyl phosphate pocket. 14–15 (DH) lines the 1-deoxy-D-xylulose 5-phosphate pocket. Arg23 lines the 3-amino-2-oxopropyl phosphate pocket. His48 functions as the Proton acceptor in the catalytic mechanism. Arg50 and His55 together coordinate 1-deoxy-D-xylulose 5-phosphate. Glu75 functions as the Proton acceptor in the catalytic mechanism. A 1-deoxy-D-xylulose 5-phosphate-binding site is contributed by Thr105. His196 (proton donor) is an active-site residue. 3-amino-2-oxopropyl phosphate is bound by residues Gly197 and 218–219 (GH).

Belongs to the PNP synthase family. As to quaternary structure, homooctamer; tetramer of dimers.

It localises to the cytoplasm. The catalysed reaction is 3-amino-2-oxopropyl phosphate + 1-deoxy-D-xylulose 5-phosphate = pyridoxine 5'-phosphate + phosphate + 2 H2O + H(+). Its pathway is cofactor biosynthesis; pyridoxine 5'-phosphate biosynthesis; pyridoxine 5'-phosphate from D-erythrose 4-phosphate: step 5/5. Catalyzes the complicated ring closure reaction between the two acyclic compounds 1-deoxy-D-xylulose-5-phosphate (DXP) and 3-amino-2-oxopropyl phosphate (1-amino-acetone-3-phosphate or AAP) to form pyridoxine 5'-phosphate (PNP) and inorganic phosphate. This Pseudomonas savastanoi pv. phaseolicola (strain 1448A / Race 6) (Pseudomonas syringae pv. phaseolicola (strain 1448A / Race 6)) protein is Pyridoxine 5'-phosphate synthase.